Here is a 147-residue protein sequence, read N- to C-terminus: Small ribosomal subunit protein uS12 (147 aa).

It belongs to the universal ribosomal protein uS12 family. In terms of assembly, part of the 30S ribosomal subunit.

Its function is as follows. With S4 and S5 plays an important role in translational accuracy. Located at the interface of the 30S and 50S subunits. In Methanococcus maripaludis (strain C7 / ATCC BAA-1331), this protein is Small ribosomal subunit protein uS12.